We begin with the raw amino-acid sequence, 983 residues long: Bifunctional glutamine synthetase adenylyltransferase/adenylyl-removing enzyme (983 aa).

Residues 1–468 (MTVENAKALF…KQYAALFAQA (468 aa)) form an adenylyl removase region. Residues 473-983 (AASGNLVFTG…FDKLVGHGAD (511 aa)) form an adenylyl transferase region.

The protein belongs to the GlnE family. Mg(2+) is required as a cofactor.

The enzyme catalyses [glutamine synthetase]-O(4)-(5'-adenylyl)-L-tyrosine + phosphate = [glutamine synthetase]-L-tyrosine + ADP. The catalysed reaction is [glutamine synthetase]-L-tyrosine + ATP = [glutamine synthetase]-O(4)-(5'-adenylyl)-L-tyrosine + diphosphate. In terms of biological role, involved in the regulation of glutamine synthetase GlnA, a key enzyme in the process to assimilate ammonia. When cellular nitrogen levels are high, the C-terminal adenylyl transferase (AT) inactivates GlnA by covalent transfer of an adenylyl group from ATP to specific tyrosine residue of GlnA, thus reducing its activity. Conversely, when nitrogen levels are low, the N-terminal adenylyl removase (AR) activates GlnA by removing the adenylyl group by phosphorolysis, increasing its activity. The regulatory region of GlnE binds the signal transduction protein PII (GlnB) which indicates the nitrogen status of the cell. The protein is Bifunctional glutamine synthetase adenylyltransferase/adenylyl-removing enzyme of Brucella suis biovar 1 (strain 1330).